Reading from the N-terminus, the 60-residue chain is Large ribosomal subunit protein bL32 (60 aa).

Belongs to the bacterial ribosomal protein bL32 family.

In Streptococcus equi subsp. zooepidemicus (strain MGCS10565), this protein is Large ribosomal subunit protein bL32.